Here is a 355-residue protein sequence, read N- to C-terminus: Glycerol-3-phosphate dehydrogenase [NAD(P)+] (355 aa).

4 residues coordinate NADPH: serine 14, tryptophan 15, arginine 35, and lysine 117. Positions 117, 147, and 149 each coordinate sn-glycerol 3-phosphate. Alanine 151 lines the NADPH pocket. Residues lysine 202, aspartate 255, serine 265, arginine 266, and asparagine 267 each contribute to the sn-glycerol 3-phosphate site. Catalysis depends on lysine 202, which acts as the Proton acceptor. Arginine 266 is a binding site for NADPH. Residues isoleucine 290 and glutamate 292 each contribute to the NADPH site.

This sequence belongs to the NAD-dependent glycerol-3-phosphate dehydrogenase family.

The protein resides in the cytoplasm. It catalyses the reaction sn-glycerol 3-phosphate + NAD(+) = dihydroxyacetone phosphate + NADH + H(+). The catalysed reaction is sn-glycerol 3-phosphate + NADP(+) = dihydroxyacetone phosphate + NADPH + H(+). It participates in membrane lipid metabolism; glycerophospholipid metabolism. Its function is as follows. Catalyzes the reduction of the glycolytic intermediate dihydroxyacetone phosphate (DHAP) to sn-glycerol 3-phosphate (G3P), the key precursor for phospholipid synthesis. The sequence is that of Glycerol-3-phosphate dehydrogenase [NAD(P)+] from Lawsonia intracellularis (strain PHE/MN1-00).